A 294-amino-acid polypeptide reads, in one-letter code: MYNIFKGLITALITPFKDNKLDLYALENILNQQIKHKIDAVLIAGSTGEANSLSFEEYKLLLKTSVDIVNNRMPIISGCSSNNTAYAIELAIESKKIGVDCFMASPPSYVKPTQHGIYKHFEALHEACNLPIMLYSAPTRSGVDFSDETILRLSKLPRILALKDCGVDLERPMRIRAIVKGDFNILTGNDEVVLAFHAQGVVGWISVTSNIAPKLCKELLEKWYNNDTQGALEIHQKLLPLYKALFLESNPIPVKYAAYYLGLCENEIRLPLTEASDSAKKQIKKIITSLSIKI.

Pyruvate is bound at residue Thr-47. Tyr-135 (proton donor/acceptor) is an active-site residue. Catalysis depends on Lys-163, which acts as the Schiff-base intermediate with substrate. Ile-205 serves as a coordination point for pyruvate.

This sequence belongs to the DapA family. Homotetramer; dimer of dimers.

The protein resides in the cytoplasm. It catalyses the reaction L-aspartate 4-semialdehyde + pyruvate = (2S,4S)-4-hydroxy-2,3,4,5-tetrahydrodipicolinate + H2O + H(+). It functions in the pathway amino-acid biosynthesis; L-lysine biosynthesis via DAP pathway; (S)-tetrahydrodipicolinate from L-aspartate: step 3/4. Its function is as follows. Catalyzes the condensation of (S)-aspartate-beta-semialdehyde [(S)-ASA] and pyruvate to 4-hydroxy-tetrahydrodipicolinate (HTPA). The chain is 4-hydroxy-tetrahydrodipicolinate synthase from Rickettsia prowazekii (strain Madrid E).